Reading from the N-terminus, the 199-residue chain is Probable thymidylate kinase (199 aa).

9 to 16 (GIDGCGKT) is an ATP binding site.

The protein belongs to the thymidylate kinase family.

It carries out the reaction dTMP + ATP = dTDP + ADP. In Methanococcus maripaludis (strain C6 / ATCC BAA-1332), this protein is Probable thymidylate kinase.